The chain runs to 222 residues: Protein THYLAKOID ASSEMBLY 8, chloroplastic (222 aa).

The N-terminal 32 residues, 1–32, are a transit peptide targeting the chloroplast; it reads MALSLSQTRPPSLSHSHTLSVIVPKRTFVSIR. 2 PPR repeats span residues 115 to 149 and 150 to 184; these read DLVLYADIVNALTRNKEFDEIDRLIGEIDGIDQRS and DDKALAKLIRAVVGAERRESVVRVYTLMRESGWGS.

The protein belongs to the PPR family. P subfamily.

It localises to the plastid. It is found in the chloroplast thylakoid membrane. Essential protein required during embryogenesis. Mediates group II organellar RNA introns splicing (e.g. ycf3-2 and trnA). Binds weakly to specific RNA. Promotes the biogenesis of chloroplast thylakoid membranes. The chain is Protein THYLAKOID ASSEMBLY 8, chloroplastic from Arabidopsis thaliana (Mouse-ear cress).